The chain runs to 196 residues: MPIGVPKVPFRSPGDEDASWVDVINRLYRERLLFLGQEVDSEISNQLIGLMVFLSIEDDTKDLYLFINSPGGWVIPGLGIYDTMQFVQPDVQTICMGLAASMGSFILVGGEITKRLAFPHARVMIHQPASSFYEAQTGEFILEAEELLKLRETITRVYVQRTGKSLWVISEDMERDVFMSATEAQAHGLVDLVAVE.

The active-site Nucleophile is the serine 101. Residue histidine 126 is part of the active site.

The protein belongs to the peptidase S14 family. In terms of assembly, component of the chloroplastic Clp protease core complex.

Its subcellular location is the plastid. The protein resides in the chloroplast stroma. It carries out the reaction Hydrolysis of proteins to small peptides in the presence of ATP and magnesium. alpha-casein is the usual test substrate. In the absence of ATP, only oligopeptides shorter than five residues are hydrolyzed (such as succinyl-Leu-Tyr-|-NHMec, and Leu-Tyr-Leu-|-Tyr-Trp, in which cleavage of the -Tyr-|-Leu- and -Tyr-|-Trp bonds also occurs).. Its function is as follows. Cleaves peptides in various proteins in a process that requires ATP hydrolysis. Has a chymotrypsin-like activity. Plays a major role in the degradation of misfolded proteins. This is ATP-dependent Clp protease proteolytic subunit from Morus indica (Mulberry).